The chain runs to 190 residues: UPF0200 protein TGAM_0868 (190 aa).

Gly-7–Ser-14 is an ATP binding site.

It belongs to the UPF0200 family.

The protein is UPF0200 protein TGAM_0868 of Thermococcus gammatolerans (strain DSM 15229 / JCM 11827 / EJ3).